A 489-amino-acid polypeptide reads, in one-letter code: MGDRGGAGGSRRRRTGSRPSIQGGSGPAAAEEEVRDVGAGGDAPVRDTDKDGDVDVGSGHWDLRCHRLQDSLFSSDSGFSNYRGILNWCVVMLILSNARLFLENLIKYGILVDPIQVVSLFLKDPYSWPALCLVIVANIFAVAAFQVEKRLAVGALTEQAGLLLHGVNLATILCFPAAVAFLLESITPVGSVLALMVYTILFLKLFSYRDVNLWCRERRAGAKAKAALAGKKANGGAAQRTVSYPDNLTYRDLYYFLFAPTLCYELNFPRSPRIRKRFLLRRLLEMLFLTQLQVGLIQQWMVPAIQNSMKPFKDMDYSRIVERLLKLAVPNHLIWLIFFYWLFHSCLNAVAELMQFGDREFYRDWWNSESITYFWQNWNIPVHKWCIRHFYKPMLRRGSSKWAARTAVFLASAFFHEYLVSIPLRMFRLWAFTGMMAQIPLAWIVGRFFRGNYGNAAVWLSLIIGQPVAVLMYVHDYYVLNREAPAAGT.

Residues 1-54 (MGDRGGAGGSRRRRTGSRPSIQGGSGPAAAEEEVRDVGAGGDAPVRDTDKDGDV) form a disordered region. The Cytoplasmic segment spans residues 1–80 (MGDRGGAGGS…SLFSSDSGFS (80 aa)). An involved in homomerization region spans residues 1–88 (MGDRGGAGGS…FSNYRGILNW (88 aa)). Residue serine 20 is modified to Phosphoserine. A compositionally biased stretch (basic and acidic residues) spans 44-53 (PVRDTDKDGD). Residues 81 to 115 (NYRGILNWCVVMLILSNARLFLENLIKYGILVDPI) form a helical membrane-spanning segment. The Lumenal portion of the chain corresponds to 116–127 (QVVSLFLKDPYS). The tract at residues 116–127 (QVVSLFLKDPYS) is extracellular loop 1 (EL1). The helical transmembrane segment at 128–153 (WPALCLVIVANIFAVAAFQVEKRLAV) threads the bilayer. An MBOAT fold region spans residues 128 to 489 (WPALCLVIVA…LNREAPAAGT (362 aa)). Residues 154 to 158 (GALTE) lie on the Cytoplasmic side of the membrane. The chain crosses the membrane as a helical span at residues 159-181 (QAGLLLHGVNLATILCFPAAVAF). The Lumenal segment spans residues 182-188 (LLESITP). Residues 189–220 (VGSVLALMVYTILFLKLFSYRDVNLWCRERRA) form a helical membrane-spanning segment. Over 221 to 274 (GAKAKAALAGKKANGGAAQRTVSYPDNLTYRDLYYFLFAPTLCYELNFPRSPRI) the chain is Cytoplasmic. Residues 225–277 (KAALAGKKANGGAAQRTVSYPDNLTYRDLYYFLFAPTLCYELNFPRSPRIRKR) are intracellular loop 1 (IL1). The helical transmembrane segment at 275–309 (RKRFLLRRLLEMLFLTQLQVGLIQQWMVPAIQNSM) threads the bilayer. The Lumenal portion of the chain corresponds to 310-316 (KPFKDMD). A helical membrane pass occupies residues 317–354 (YSRIVERLLKLAVPNHLIWLIFFYWLFHSCLNAVAELM). At 355–400 (QFGDREFYRDWWNSESITYFWQNWNIPVHKWCIRHFYKPMLRRGSS) the chain is on the cytoplasmic side. The interval 355 to 400 (QFGDREFYRDWWNSESITYFWQNWNIPVHKWCIRHFYKPMLRRGSS) is intracellular loop 2 (IL2). An FYXDWWN motif motif is present at residues 361 to 367 (FYRDWWN). Residues 375 to 383 (WQNWNIPVH), tyrosine 391, and arginine 405 each bind an acyl-CoA. The segment at 381–395 (PVHKWCIRHFYKPML) is amphipathic helix (AH). The helical transmembrane segment at 401–421 (KWAARTAVFLASAFFHEYLVS) threads the bilayer. Histidine 416 is a catalytic residue. At 422 to 429 (IPLRMFRL) the chain is on the lumenal side. The chain crosses the membrane as a helical span at residues 430–448 (WAFTGMMAQIPLAWIVGRF). Residues 449 to 450 (FR) are Cytoplasmic-facing. A helical membrane pass occupies residues 451-482 (GNYGNAAVWLSLIIGQPVAVLMYVHDYYVLNR). An acyl-CoA is bound at residue tyrosine 478. Over 483-489 (EAPAAGT) the chain is Lumenal.

Belongs to the membrane-bound acyltransferase family. Sterol o-acyltransferase subfamily. As to quaternary structure, homodimer or homotetramer; both forms have similar enzymatic activities.

The protein localises to the endoplasmic reticulum membrane. The catalysed reaction is an acyl-CoA + a 1,2-diacyl-sn-glycerol = a triacyl-sn-glycerol + CoA. The enzyme catalyses all-trans-retinol + an acyl-CoA = an all-trans-retinyl ester + CoA. It catalyses the reaction 2-(9Z-octadecenoyl)-glycerol + (9Z)-octadecenoyl-CoA = 1,2-di-(9Z-octadecenoyl)-sn-glycerol + CoA. It carries out the reaction 1,2-di-(9Z-octadecenoyl)-sn-glycerol + (9Z)-octadecenoyl-CoA = 1,2,3-tri-(9Z-octadecenoyl)-glycerol + CoA. The catalysed reaction is all-trans-retinol + hexadecanoyl-CoA = all-trans-retinyl hexadecanoate + CoA. The enzyme catalyses 1-O-(9Z-octadecenyl)-glycerol + (9Z)-octadecenoyl-CoA = 1-O-(9Z-octadecyl)-3-(9Z-octadecenoyl)-glycerol + CoA. It catalyses the reaction 1-O-(9Z-octadecyl)-3-(9Z-octadecenoyl)-glycerol + (9Z)-octadecenoyl-CoA = 1-O-(9Z-octadecenyl)-2,3-di-(9Z-octadecenoyl)glycerol + CoA. It carries out the reaction 1-(9Z-octadecenoyl)-glycerol + (9Z)-octadecenoyl-CoA = 1,2-di-(9Z-octadecenoyl)-glycerol + CoA. The catalysed reaction is 1,2-di-(9Z-octadecenoyl)-glycerol + (9Z)-octadecenoate + H(+) = 1,2,3-tri-(9Z-octadecenoyl)-glycerol + H2O. The enzyme catalyses 1-octadecanoyl-2-(5Z,8Z,11Z,14Z-eicosatetraenoyl)-sn-glycerol + (9Z)-octadecenoyl-CoA = 1-octadecanoyl-2-(5Z,8Z,11Z,14Z)-eicosatetraenoyl-3-(9Z)-octadecenoyl-sn-glycerol + CoA. It catalyses the reaction hexadecane-1,2-diol + 2 hexadecanoyl-CoA = 1,2-O,O-dihexadecanoyl-1,2-hexadecanediol + 2 CoA. It carries out the reaction hexadecane-1,2-diol + hexadecanoyl-CoA = 2-hydroxyhexadecyl hexadecanoate + CoA. The catalysed reaction is 2-(9Z-octadecenoyl)-glycerol + hexadecanoyl-CoA = 1-hexadecanoyl-2-(9Z-octadecenoyl)-sn-glycerol + CoA. The enzyme catalyses 1,2-di-(9Z-octadecenoyl)-sn-glycerol + hexadecanoyl-CoA = 1,2-di-(9Z)-octadecenoyl-3-hexadecanoyl-sn-glycerol + CoA. It catalyses the reaction hexadecan-1-ol + hexadecanoyl-CoA = hexadecanyl hexadecanoate + CoA. It carries out the reaction 13-cis-retinol + hexadecanoyl-CoA = 13-cis-retinyl hexadecanoate + CoA. The catalysed reaction is 1,3-di-(9Z-octadecenoyl)-glycerol + (9Z)-octadecenoyl-CoA = 1,2,3-tri-(9Z-octadecenoyl)-glycerol + CoA. The enzyme catalyses 2,3-di-(9Z)-octadecenoyl-sn-glycerol + (9Z)-octadecenoyl-CoA = 1,2,3-tri-(9Z-octadecenoyl)-glycerol + CoA. It functions in the pathway lipid metabolism; glycerolipid metabolism. Functionally, catalyzes the terminal and only committed step in triacylglycerol synthesis by using diacylglycerol and fatty acyl CoA as substrates. Highly expressed in epithelial cells of the small intestine and its activity is essential for the absorption of dietary fats. In liver, plays a role in esterifying exogenous fatty acids to glycerol, and is required to synthesize fat for storage. Also present in female mammary glands, where it produces fat in the milk. May be involved in VLDL (very low density lipoprotein) assembly. In contrast to DGAT2 it is not essential for survival. Functions as the major acyl-CoA retinol acyltransferase (ARAT) in the skin, where it acts to maintain retinoid homeostasis and prevent retinoid toxicity leading to skin and hair disorders. Exhibits additional acyltransferase activities, includin acyl CoA:monoacylglycerol acyltransferase (MGAT), wax monoester and wax diester synthases. Also able to use 1-monoalkylglycerol (1-MAkG) as an acyl acceptor for the synthesis of monoalkyl-monoacylglycerol (MAMAG). The chain is Diacylglycerol O-acyltransferase 1 (DGAT1) from Bos taurus (Bovine).